The following is a 56-amino-acid chain: Large ribosomal subunit protein bL32 (56 aa).

Residues 1–37 (MAVQQNKPTRSKRGMRRSHDALTAPLLSVDKTSGETH) form a disordered region.

Belongs to the bacterial ribosomal protein bL32 family.

In Photorhabdus laumondii subsp. laumondii (strain DSM 15139 / CIP 105565 / TT01) (Photorhabdus luminescens subsp. laumondii), this protein is Large ribosomal subunit protein bL32.